Here is a 199-residue protein sequence, read N- to C-terminus: Peroxiredoxin 2 (199 aa).

The 152-residue stretch at 1 to 152 (MGQKAPDFTV…IIRVIKALQF (152 aa)) folds into the Thioredoxin domain. C40 acts as the Cysteine sulfenic acid (-SOH) intermediate in catalysis. Substrate is bound at residue R115.

This sequence belongs to the peroxiredoxin family. Prx6 subfamily. In terms of assembly, homodecamer. Pentamer of dimers that assemble into a ring structure.

The protein resides in the cytoplasm. It catalyses the reaction a hydroperoxide + [thioredoxin]-dithiol = an alcohol + [thioredoxin]-disulfide + H2O. Thiol-specific peroxidase that catalyzes the reduction of hydrogen peroxide and organic hydroperoxides to water and alcohols, respectively. Plays a role in cell protection against oxidative stress by detoxifying peroxides. The protein is Peroxiredoxin 2 of Thermoplasma acidophilum (strain ATCC 25905 / DSM 1728 / JCM 9062 / NBRC 15155 / AMRC-C165).